The sequence spans 138 residues: Thyrotropin subunit beta (138 aa).

The N-terminal stretch at 1–20 is a signal peptide; that stretch reads MTAIYLMSMLFGLACGQAMS. Intrachain disulfides connect C22–C72, C36–C87, C39–C125, C47–C103, C51–C105, and C108–C115. N-linked (GlcNAc...) asparagine glycosylation occurs at N43. The propeptide occupies 133–138; that stretch reads VVGFSI.

Belongs to the glycoprotein hormones subunit beta family. In terms of assembly, heterodimer of a common alpha chain and a unique beta chain which confers biological specificity to thyrotropin, lutropin, follitropin and gonadotropin.

It localises to the secreted. Its function is as follows. Indispensable for the control of thyroid structure and metabolism. This chain is Thyrotropin subunit beta (TSHB), found in Canis lupus familiaris (Dog).